Here is a 494-residue protein sequence, read N- to C-terminus: MTAKCIMVLGTTSGAGKSWLTTALCRYYARQGLKVAPFKAQNMSNNARVVASDKGSGEIGSAQYFQALAARSVPDVRMNPLLLKPEADTHSQVVLMGRVSDALTAMPWRSRSNHVWPHIAAALDELRSENDVVVIEGAGSPAEINLSGSDIVNMRVARHCDAACLLVTDIDRGGAFAHLYGTWALLPERERVLIKGFVLNKFRGDAALLAPAPQMLQDLTRIATVATLPMWWQHGLPEEDGVFDDRSTASGAVKQTVAVIAYPRISNLDEFQPLKNIPGLRLMWVRSPAELAGLSASDWVILPGSKATSSDLAWLRAQGLDAAVAAHAGRGGAVLGICAGLQMLGKALIDPQGVDGDAPGLGLLPLVTVFELDKTVRHTQATFADGIAAPWHALAAVTVSGYEIHQGITQPQSTPATAGEVARAVLPGGLAWQNAAGNVLGLYLHGLFEDPGALQALFGAQLNGPVPTLDVVFDRLADFIELHFQPGVLPGLLT.

The GATase cobBQ-type domain occupies 254 to 453; the sequence is KQTVAVIAYP…LHGLFEDPGA (200 aa). C338 functions as the Nucleophile in the catalytic mechanism. The active site involves H445.

This sequence belongs to the CobB/CobQ family. CobQ subfamily.

The protein operates within cofactor biosynthesis; adenosylcobalamin biosynthesis. Its function is as follows. Catalyzes amidations at positions B, D, E, and G on adenosylcobyrinic A,C-diamide. NH(2) groups are provided by glutamine, and one molecule of ATP is hydrogenolyzed for each amidation. The protein is Cobyric acid synthase of Albidiferax ferrireducens (strain ATCC BAA-621 / DSM 15236 / T118) (Rhodoferax ferrireducens).